The chain runs to 40 residues: Large ribosomal subunit protein bL36B (40 aa).

This sequence belongs to the bacterial ribosomal protein bL36 family.

The protein is Large ribosomal subunit protein bL36B of Arthrobacter sp. (strain FB24).